The chain runs to 58 residues: MSTIKIKQVKSRIGAPADQKRTLDALGLRKLNRVVEHESTPSILGMVDKVKHLVAIVK.

It belongs to the universal ribosomal protein uL30 family. In terms of assembly, part of the 50S ribosomal subunit.

The protein is Large ribosomal subunit protein uL30 of Bacteroides fragilis (strain ATCC 25285 / DSM 2151 / CCUG 4856 / JCM 11019 / LMG 10263 / NCTC 9343 / Onslow / VPI 2553 / EN-2).